The following is a 473-amino-acid chain: Ribulose bisphosphate carboxylase large chain (473 aa).

Substrate-binding residues include Asn116 and Thr166. The active-site Proton acceptor is the Lys168. A substrate-binding site is contributed by Lys170. Residues Lys194, Asp196, and Glu197 each contribute to the Mg(2+) site. Lys194 carries the post-translational modification N6-carboxylysine. Residue His287 is the Proton acceptor of the active site. Substrate contacts are provided by Arg288, His320, and Ser372.

The protein belongs to the RuBisCO large chain family. Type I subfamily. As to quaternary structure, heterohexadecamer of 8 large chains and 8 small chains. It depends on Mg(2+) as a cofactor.

It carries out the reaction 2 (2R)-3-phosphoglycerate + 2 H(+) = D-ribulose 1,5-bisphosphate + CO2 + H2O. The enzyme catalyses D-ribulose 1,5-bisphosphate + O2 = 2-phosphoglycolate + (2R)-3-phosphoglycerate + 2 H(+). Its function is as follows. RuBisCO catalyzes two reactions: the carboxylation of D-ribulose 1,5-bisphosphate, the primary event in carbon dioxide fixation, as well as the oxidative fragmentation of the pentose substrate. Both reactions occur simultaneously and in competition at the same active site. In Nitrosomonas sp. (strain ENI-11), this protein is Ribulose bisphosphate carboxylase large chain.